Reading from the N-terminus, the 642-residue chain is MPVITLPDGSQRHYDHPVSPMDVALDIGPGLAKATIAGRVNGELVDASDLIENDATLAIITAKDEEGLEIIRHSCAHLLGHAIKQLWPHTKMAIGPVVDNGFYYDVDLDRTLTQEDVEALEKRMHELAEKNYDVIKKKVSWHDARETFVKRGETYKVAILDENIAHDDKPGLYHHEEYVDMCRGPHVPNMRFCHHFKLMKTAGAYWRGDSNNKMLQRIYGTAWADKKALNAYLQRLEEAAKRDHRKIGKQLDLYHMQEEAPGMVFWHNDGWTIFRELEVFVRSKLKEYQYQEVKGPFMMDRVLWEKTGHWDNYKDAMFTTSSENREYCIKPMNCPGHVQIFNQGLKSYRDLPLRMAEFGSCHRNEPSGALHGLMRVRGFTQDDAHIFCTEEQIRDEVNACIRMVYDMYSTFGFEKIVVKLSTRPDKRIGSDEMWDRAEADLAVALEENNIPFEYQLGEGAFYGPKIEFTLYDCLDRAWQCGTVQLDFSLPSRLSASYVGEDNERKVPVMIHRAILGSMERFIGILTEEFAGFFPTWLAPVQVVVMNITDSQSEYVNELTQKLQNAGIRVKADLRNEKIGFKIREHTLRRVPYMLVCGDKEVEAGKVAVRTRRGKDLGSLDVNDVIEKLQQEIRSRSLQQLEE.

A TGS domain is found at 1 to 61 (MPVITLPDGS…ENDATLAIIT (61 aa)). Residues 243–534 (DHRKIGKQLD…LTEEFAGFFP (292 aa)) form a catalytic region. Zn(2+) is bound by residues Cys334, His385, and His511.

This sequence belongs to the class-II aminoacyl-tRNA synthetase family. Homodimer. It depends on Zn(2+) as a cofactor.

It localises to the cytoplasm. It catalyses the reaction tRNA(Thr) + L-threonine + ATP = L-threonyl-tRNA(Thr) + AMP + diphosphate + H(+). Functionally, catalyzes the attachment of threonine to tRNA(Thr) in a two-step reaction: L-threonine is first activated by ATP to form Thr-AMP and then transferred to the acceptor end of tRNA(Thr). Also edits incorrectly charged L-seryl-tRNA(Thr). This is Threonine--tRNA ligase from Salmonella dublin (strain CT_02021853).